The chain runs to 443 residues: ATP-dependent protease ATPase subunit HslU (443 aa).

ATP-binding positions include I18, 60–65, D256, E321, and R393; that span reads GVGKTE.

Belongs to the ClpX chaperone family. HslU subfamily. As to quaternary structure, a double ring-shaped homohexamer of HslV is capped on each side by a ring-shaped HslU homohexamer. The assembly of the HslU/HslV complex is dependent on binding of ATP.

The protein resides in the cytoplasm. Functionally, ATPase subunit of a proteasome-like degradation complex; this subunit has chaperone activity. The binding of ATP and its subsequent hydrolysis by HslU are essential for unfolding of protein substrates subsequently hydrolyzed by HslV. HslU recognizes the N-terminal part of its protein substrates and unfolds these before they are guided to HslV for hydrolysis. This is ATP-dependent protease ATPase subunit HslU from Pectobacterium atrosepticum (strain SCRI 1043 / ATCC BAA-672) (Erwinia carotovora subsp. atroseptica).